We begin with the raw amino-acid sequence, 874 residues long: Alanine--tRNA ligase (874 aa).

Zn(2+)-binding residues include H564, H568, C665, and H669.

Belongs to the class-II aminoacyl-tRNA synthetase family. Zn(2+) is required as a cofactor.

The protein localises to the cytoplasm. It carries out the reaction tRNA(Ala) + L-alanine + ATP = L-alanyl-tRNA(Ala) + AMP + diphosphate. In terms of biological role, catalyzes the attachment of alanine to tRNA(Ala) in a two-step reaction: alanine is first activated by ATP to form Ala-AMP and then transferred to the acceptor end of tRNA(Ala). Also edits incorrectly charged Ser-tRNA(Ala) and Gly-tRNA(Ala) via its editing domain. The chain is Alanine--tRNA ligase from Burkholderia pseudomallei (strain 668).